Consider the following 622-residue polypeptide: 3-(3-hydroxy-phenyl)propionate/3-hydroxycinnamic acid hydroxylase (622 aa).

Residues 20–49 (DVAIIGAGPVGLMIANYLGLQGVRVVVLEK) and 288–298 (FRVDRVLLAGD) each bind FAD.

This sequence belongs to the PheA/TfdB FAD monooxygenase family. FAD is required as a cofactor.

It carries out the reaction 3-(3-hydroxyphenyl)propanoate + NADH + O2 + H(+) = 3-(2,3-dihydroxyphenyl)propanoate + NAD(+) + H2O. The enzyme catalyses (2E)-3-(3-hydroxyphenyl)prop-2-enoate + NADH + O2 + H(+) = (2E)-3-(2,3-dihydroxyphenyl)prop-2-enoate + NAD(+) + H2O. Its pathway is aromatic compound metabolism; 3-phenylpropanoate degradation. Catalyzes the insertion of one atom of molecular oxygen into position 2 of the phenyl ring of 3-(3-hydroxyphenyl)propionate (3-HPP) and hydroxycinnamic acid (3HCI). This chain is 3-(3-hydroxy-phenyl)propionate/3-hydroxycinnamic acid hydroxylase, found in Paraburkholderia xenovorans (strain LB400).